The primary structure comprises 1263 residues: DNA topoisomerase 2 (1263 aa).

ATP contacts are provided by residues N80, N109, S137–N139, and G150–K157. The tract at residues V329 to K331 is interaction with DNA. ATP is bound at residue Q362–K364. Positions C439 to Q553 constitute a Toprim domain. Mg(2+)-binding residues include E445, D522, and D524. The 487-residue stretch at V737–L1223 folds into the Topo IIA-type catalytic domain. The active-site O-(5'-phospho-DNA)-tyrosine intermediate is Y828. A disordered region spans residues K977 to K1015. Over residues K981 to G1000 the composition is skewed to low complexity. Positions K1068–N1077 are interaction with DNA. Positions L1244–K1263 are disordered. Residues K1247–K1263 are compositionally biased toward basic residues.

The protein belongs to the type II topoisomerase family. Requires Mg(2+) as cofactor. The cofactor is Mn(2+). Ca(2+) is required as a cofactor.

It catalyses the reaction ATP-dependent breakage, passage and rejoining of double-stranded DNA.. In terms of biological role, can introduce negative superhelical turns into double-stranded circular DNA. The polypeptide is DNA topoisomerase 2 (TOP2) (Acanthamoeba polyphaga (Amoeba)).